The following is a 204-amino-acid chain: Somatotropin (204 aa).

An N-terminal signal peptide occupies residues 1–17; that stretch reads MDRVILLLSVVSLGVSS. Gln18 bears the Pyrrolidone carboxylic acid mark. A Zn(2+)-binding site is contributed by His36. The cysteines at positions 69 and 177 are disulfide-linked. Glu186 serves as a coordination point for Zn(2+). A disulfide bridge links Cys194 with Cys202.

This sequence belongs to the somatotropin/prolactin family.

The protein localises to the secreted. In terms of biological role, growth hormone plays an important role in growth control and is involved in the regulation of several anabolic processes. Implicated as an osmoregulatory substance important for seawater adaptation. The polypeptide is Somatotropin (gh) (Sebastes schlegelii (Korean rockfish)).